A 315-amino-acid chain; its full sequence is N-acetyl-gamma-glutamyl-phosphate reductase (315 aa).

Cysteine 117 is an active-site residue.

This sequence belongs to the NAGSA dehydrogenase family. Type 2 subfamily.

The protein resides in the cytoplasm. The catalysed reaction is N-acetyl-L-glutamate 5-semialdehyde + phosphate + NADP(+) = N-acetyl-L-glutamyl 5-phosphate + NADPH + H(+). It participates in amino-acid biosynthesis; L-arginine biosynthesis; N(2)-acetyl-L-ornithine from L-glutamate: step 3/4. Catalyzes the NADPH-dependent reduction of N-acetyl-5-glutamyl phosphate to yield N-acetyl-L-glutamate 5-semialdehyde. The protein is N-acetyl-gamma-glutamyl-phosphate reductase of Burkholderia ambifaria (strain ATCC BAA-244 / DSM 16087 / CCUG 44356 / LMG 19182 / AMMD) (Burkholderia cepacia (strain AMMD)).